The primary structure comprises 215 residues: 3-dehydroquinate dehydratase (215 aa).

3-dehydroquinate is bound by residues Ser6, 31 to 33 (ELR), and Arg64. His111 acts as the Proton donor/acceptor in catalysis. Catalysis depends on Lys138, which acts as the Schiff-base intermediate with substrate. 3-dehydroquinate-binding residues include Arg174, Thr193, and Gln197.

The protein belongs to the type-I 3-dehydroquinase family. In terms of assembly, homodimer.

The enzyme catalyses 3-dehydroquinate = 3-dehydroshikimate + H2O. The protein operates within metabolic intermediate biosynthesis; chorismate biosynthesis; chorismate from D-erythrose 4-phosphate and phosphoenolpyruvate: step 3/7. Functionally, involved in the third step of the chorismate pathway, which leads to the biosynthesis of aromatic amino acids. Catalyzes the cis-dehydration of 3-dehydroquinate (DHQ) and introduces the first double bond of the aromatic ring to yield 3-dehydroshikimate. The protein is 3-dehydroquinate dehydratase of Ignicoccus hospitalis (strain KIN4/I / DSM 18386 / JCM 14125).